The chain runs to 228 residues: L-ribulose-5-phosphate 4-epimerase UlaF (228 aa).

Residues 26-27 (GN), 43-44 (SG), and 72-73 (SS) each bind substrate. Residues aspartate 74, histidine 93, and histidine 95 each contribute to the Zn(2+) site. Aspartate 118 serves as the catalytic Proton donor/acceptor. Histidine 167 is a binding site for Zn(2+). Tyrosine 225 serves as the catalytic Proton donor/acceptor.

Belongs to the aldolase class II family. AraD/FucA subfamily. Requires Zn(2+) as cofactor.

It catalyses the reaction L-ribulose 5-phosphate = D-xylulose 5-phosphate. It functions in the pathway cofactor degradation; L-ascorbate degradation; D-xylulose 5-phosphate from L-ascorbate: step 4/4. Its function is as follows. Catalyzes the isomerization of L-ribulose 5-phosphate to D-xylulose 5-phosphate. Is involved in the anaerobic L-ascorbate utilization. This chain is L-ribulose-5-phosphate 4-epimerase UlaF, found in Escherichia coli O7:K1 (strain IAI39 / ExPEC).